Here is a 298-residue protein sequence, read N- to C-terminus: Probable GTP 3',8-cyclase (298 aa).

Residues R4 to D227 form the Radical SAM core domain. R13 lines the GTP pocket. 2 residues coordinate [4Fe-4S] cluster: C20 and C24. Residue Y26 coordinates S-adenosyl-L-methionine. Residue C27 participates in [4Fe-4S] cluster binding. A GTP-binding site is contributed by K61. G65 contributes to the S-adenosyl-L-methionine binding site. A GTP-binding site is contributed by T91. S115 provides a ligand contact to S-adenosyl-L-methionine. K152 contacts GTP. The [4Fe-4S] cluster site is built by C243 and C246. Residue R248 to R250 participates in GTP binding. C260 is a [4Fe-4S] cluster binding site.

This sequence belongs to the radical SAM superfamily. MoaA family. The cofactor is [4Fe-4S] cluster.

The enzyme catalyses GTP + AH2 + S-adenosyl-L-methionine = (8S)-3',8-cyclo-7,8-dihydroguanosine 5'-triphosphate + 5'-deoxyadenosine + L-methionine + A + H(+). It participates in cofactor biosynthesis; molybdopterin biosynthesis. In terms of biological role, catalyzes the cyclization of GTP to (8S)-3',8-cyclo-7,8-dihydroguanosine 5'-triphosphate. The chain is Probable GTP 3',8-cyclase from Methanococcus maripaludis (strain C6 / ATCC BAA-1332).